Consider the following 685-residue polypeptide: Glycine--tRNA ligase beta subunit (685 aa).

Positions 58-77 (GLTAQSPTTREERKGPRTDA) are disordered. Basic and acidic residues predominate over residues 66-77 (TREERKGPRTDA).

This sequence belongs to the class-II aminoacyl-tRNA synthetase family. In terms of assembly, tetramer of two alpha and two beta subunits.

It is found in the cytoplasm. The enzyme catalyses tRNA(Gly) + glycine + ATP = glycyl-tRNA(Gly) + AMP + diphosphate. In Paracoccus denitrificans (strain Pd 1222), this protein is Glycine--tRNA ligase beta subunit.